Consider the following 248-residue polypeptide: MSEIRTGFLTMATIILICIGLTMTGTGLYYRKTVSKCIRETDGSFVVIGLLLLVIPQFALYAICCHSKRMFTIYIYAMIFVSIVLGGYSLKCFIYNTTFGIAKNPAEEKRTAKQLVGRLVPESKLAKVTECIIHNHDCNFNASQNSNVWRYCCAQPRGCGVTTMFGQPGEWSWKHQHVENHVPEECSYEYCLSCRGCQMSILKAIVHQWKYLSMFSYPALFLVCLSLAISRSIMDTFDEPDDYRGYYS.

Over 1–7 (MSEIRTG) the chain is Cytoplasmic. Residues 8–28 (FLTMATIILICIGLTMTGTGL) traverse the membrane as a helical segment. Residues 29-44 (YYRKTVSKCIRETDGS) are Extracellular-facing. Residues 45–65 (FVVIGLLLLVIPQFALYAICC) form a helical membrane-spanning segment. Topologically, residues 66 to 69 (HSKR) are cytoplasmic. A helical transmembrane segment spans residues 70-90 (MFTIYIYAMIFVSIVLGGYSL). The Extracellular segment spans residues 91-208 (KCFIYNTTFG…MSILKAIVHQ (118 aa)). N-linked (GlcNAc...) asparagine glycans are attached at residues Asn96 and Asn141. Residues 209 to 229 (WKYLSMFSYPALFLVCLSLAI) traverse the membrane as a helical segment. The Cytoplasmic segment spans residues 230–248 (SRSIMDTFDEPDDYRGYYS).

It belongs to the tetraspanin (TM4SF) family.

The protein resides in the membrane. Functionally, may be involved in the regulation of cell differentiation. The polypeptide is Tetraspanin-16 (TET16) (Arabidopsis thaliana (Mouse-ear cress)).